A 1201-amino-acid chain; its full sequence is Protein dduB (1201 aa).

The signal sequence occupies residues Met1–Ser22. The Extracellular portion of the chain corresponds to Gly23–Ser1180. 23 N-linked (GlcNAc...) asparagine glycosylation sites follow: Asn68, Asn122, Asn150, Asn185, Asn283, Asn348, Asn360, Asn437, Asn448, Asn518, Asn535, Asn554, Asn585, Asn631, Asn759, Asn815, Asn830, Asn844, Asn946, Asn1042, Asn1058, Asn1098, and Asn1108. Residues Ser1181–Leu1201 form a helical membrane-spanning segment.

It is found in the membrane. The protein is Protein dduB (dduB) of Dictyostelium discoideum (Social amoeba).